A 739-amino-acid polypeptide reads, in one-letter code: Potassium transporter 26 (739 aa).

At 1 to 81 (MEYHHRPHSP…RQVALLSFQS (81 aa)) the chain is on the cytoplasmic side. A helical transmembrane segment spans residues 82 to 102 (LGVVYGDLGTSPLYVFSSISL). Topologically, residues 103 to 112 (DDPGEADFVG) are extracellular. A helical transmembrane segment spans residues 113-133 (ILSIILWTFTMICLVKYVFIV). The Cytoplasmic portion of the chain corresponds to 134–198 (LKADDHGEGG…KFLEQSTKWQ (65 aa)). The helical transmembrane segment at 199 to 219 (AVITYIVLAGTCMVLGDGALT) threads the bilayer. The Extracellular portion of the chain corresponds to 220–236 (PAISVLSAVQGIQSRSS). The helical transmembrane segment at 237–257 (SITQAHVVLLSVIILFILFFF) threads the bilayer. Over 258–268 (QKHGTSKVSFT) the chain is Cytoplasmic. Residues 269 to 289 (FSPIMILWFTFVAFIGLYNII) form a helical membrane-spanning segment. At 290-318 (KHYPPILKAVSPHYIIIYFIRNKRAAWET) the chain is on the extracellular side. A helical transmembrane segment spans residues 319–339 (LGAIVLCITGAEAMFADLGHF). Residues 340–347 (NKSSIQMA) lie on the Cytoplasmic side of the membrane. The helical transmembrane segment at 348–368 (FSVIVYPSMILAYAGQAAFLV) threads the bilayer. Over 369–385 (KNPSKLSTTFYSSTPEP) the chain is Extracellular. A helical transmembrane segment spans residues 386–406 (LFWPMFIIATLAAIVASQALI). Residues 407–437 (SASFSIIRQSIALGCFPRVTMKHTSGKHEGQ) are Cytoplasmic-facing. A helical transmembrane segment spans residues 438–458 (VYSPEINYFLMVACILITVGF). At 459–469 (KGGPEIGQAFG) the chain is on the extracellular side. The chain crosses the membrane as a helical span at residues 470 to 490 (VAVIFVMLFTTNLMTVVMLII). Residues 491–494 (WESN) lie on the Cytoplasmic side of the membrane. A helical membrane pass occupies residues 495–515 (IALASLFFVFFFSIEGIYMTS). At 516–519 (LMNK) the chain is on the extracellular side. The helical transmembrane segment at 520–540 (ILQGGWVPFAITAFFLIITLS) threads the bilayer. The Cytoplasmic segment spans residues 541-739 (WTYGRSKKGE…TLQVGMLYEI (199 aa)).

It belongs to the HAK/KUP transporter (TC 2.A.72.3) family.

It is found in the membrane. High-affinity potassium transporter. This Oryza sativa subsp. japonica (Rice) protein is Potassium transporter 26 (HAK26).